A 151-amino-acid polypeptide reads, in one-letter code: Large ribosomal subunit protein bL17 (151 aa).

It belongs to the bacterial ribosomal protein bL17 family. In terms of assembly, part of the 50S ribosomal subunit. Contacts protein L32.

This Chlorobium limicola (strain DSM 245 / NBRC 103803 / 6330) protein is Large ribosomal subunit protein bL17.